The following is an 86-amino-acid chain: Large ribosomal subunit protein bL31 (86 aa).

Positions 16, 18, 38, and 41 each coordinate Zn(2+).

The protein belongs to the bacterial ribosomal protein bL31 family. Type A subfamily. As to quaternary structure, part of the 50S ribosomal subunit. It depends on Zn(2+) as a cofactor.

Its function is as follows. Binds the 23S rRNA. The polypeptide is Large ribosomal subunit protein bL31 (Acidothermus cellulolyticus (strain ATCC 43068 / DSM 8971 / 11B)).